The chain runs to 114 residues: MEWSVENNLVCPTTGTAFALTSGAENLKFILWYKGDYFLRTGSVISPEDSGVLANGKKRNIKILHVFPYSNALWASFHNRIDCPGNGVVTINHCARQQQCVFTLCPYGARTVTG.

This sequence belongs to the IraM/RssC family.

The protein localises to the cytoplasm. Its function is as follows. Involved in the stabilization of the sigma stress factor RpoS. This is Anti-adapter protein IraM from Citrobacter koseri (strain ATCC BAA-895 / CDC 4225-83 / SGSC4696).